The sequence spans 116 residues: Large ribosomal subunit protein bL19 (116 aa).

Belongs to the bacterial ribosomal protein bL19 family.

In terms of biological role, this protein is located at the 30S-50S ribosomal subunit interface and may play a role in the structure and function of the aminoacyl-tRNA binding site. In Staphylococcus aureus (strain Mu3 / ATCC 700698), this protein is Large ribosomal subunit protein bL19.